The sequence spans 65 residues: Small ribosomal subunit protein bS21 (65 aa).

Belongs to the bacterial ribosomal protein bS21 family.

This chain is Small ribosomal subunit protein bS21, found in Geotalea daltonii (strain DSM 22248 / JCM 15807 / FRC-32) (Geobacter daltonii).